A 160-amino-acid chain; its full sequence is Putative transcriptional regulator protein YobU (160 aa).

This is Putative transcriptional regulator protein YobU (yobU) from Bacillus subtilis (strain 168).